We begin with the raw amino-acid sequence, 350 residues long: Protein memo-1 homolog (350 aa).

Belongs to the MEMO1 family. As to quaternary structure, interacts with rho-1. Expressed in neuronal and non-neuronal cells in the head and tail, pharyngeal cells, spermatheca, distal tip cells, anchor cell and the intestine.

In terms of biological role, plays a role in the oxidative stress response and the maintenance of longevity by regulating the interaction between GTPase rho-1 and oxidase bli-3. In turn, this serves to modulate bli-3 activity and the control of reactive oxygen species production. May control cell migration by relaying extracellular chemotactic signals to the microtubule cytoskeleton. The chain is Protein memo-1 homolog from Caenorhabditis elegans.